The following is a 601-amino-acid chain: Glutamine--fructose-6-phosphate aminotransferase [isomerizing] (601 aa).

Residue Cys2 is the Nucleophile; for GATase activity of the active site. Positions Cys2–Asp216 constitute a Glutamine amidotransferase type-2 domain. SIS domains follow at residues Ile282–Asp421 and Ile453–Pro591. Lys596 (for Fru-6P isomerization activity) is an active-site residue.

Homodimer.

The protein localises to the cytoplasm. It carries out the reaction D-fructose 6-phosphate + L-glutamine = D-glucosamine 6-phosphate + L-glutamate. Functionally, catalyzes the first step in hexosamine metabolism, converting fructose-6P into glucosamine-6P using glutamine as a nitrogen source. This chain is Glutamine--fructose-6-phosphate aminotransferase [isomerizing], found in Listeria monocytogenes serovar 1/2a (strain ATCC BAA-679 / EGD-e).